A 615-amino-acid polypeptide reads, in one-letter code: Zinc finger protein 181 (615 aa).

Residues 48–120 (VTFSDVAIDF…EKKLSKGLIP (73 aa)) enclose the KRAB domain. Glycyl lysine isopeptide (Lys-Gly) (interchain with G-Cter in SUMO2) cross-links involve residues Lys153 and Lys170. C2H2-type zinc fingers lie at residues 281-303 (YTCS…WRIH), 309-331 (YECR…LISH), 337-359 (YKCI…QSTH), 365-387 (YECM…LRIH), 393-415 (YECR…QKIH), 421-443 (YECR…QRIH), 449-471 (YECN…QSIH), 477-499 (FECQ…LRNH), 505-527 (YECS…HRIH), 533-555 (YECI…QRIH), and 561-583 (YKCN…QRVH).

This sequence belongs to the krueppel C2H2-type zinc-finger protein family.

The protein resides in the nucleus. Functionally, may be involved in transcriptional regulation. The chain is Zinc finger protein 181 (ZNF181) from Pongo abelii (Sumatran orangutan).